The chain runs to 1479 residues: C-type mannose receptor 2 (1479 aa).

An N-terminal signal peptide occupies residues 1–30; it reads MGPGRPAPAPWPRHLLRCVLLLGCLHLGRP. Residues 31–1414 are Extracellular-facing; that stretch reads GAPGDAALPE…PSALPENPAA (1384 aa). The Ricin B-type lectin domain occupies 41 to 167; the sequence is PNVFLIFSHG…WRIYGSEEDL (127 aa). C54 and C68 are joined by a disulfide. A glycan (N-linked (GlcNAc...) (complex) asparagine) is linked at N69. A disulfide bond links C93 and C112. A glycan (N-linked (GlcNAc...) asparagine) is linked at N140. A Fibronectin type-II domain is found at 182–230; the sequence is SHGKPCTIPFKYDNQWFHGCTSTGREDGHLWCATTQDYGKDERWGFCPI. 4 disulfides stabilise this stretch: C187/C213, C201/C228, C266/C359, and C335/C351. Residues 244 to 360 enclose the C-type lectin 1 domain; it reads LTDSCYQFNF…CSIALPYVCK (117 aa). N364 carries N-linked (GlcNAc...) asparagine glycosylation. C-type lectin domains are found at residues 389–505, 528–644, 678–809, and 832–951; these read FQGH…SICK, HSPS…RYIC, KLRY…WICK, and FQEA…YICK. 2 disulfide bridges follow: C410-C504 and C481-C496. N588 carries an N-linked (GlcNAc...) asparagine glycan. Intrachain disulfides connect C618-C635, C704-C808, C785-C800, C853-C950, and C927-C942. N954 and N1029 each carry an N-linked (GlcNAc...) asparagine glycan. C-type lectin domains follow at residues 979 to 1107, 1132 to 1243, and 1273 to 1393; these read FLNK…GFIC, YLNG…GAVC, and FREH…GVVC. An intrachain disulfide couples C1078 to C1098. A Glycyl lysine isopeptide (Lys-Gly) (interchain with G-Cter in SUMO1) cross-link involves residue K1142. C1220 and C1234 form a disulfide bridge. A glycan (N-linked (GlcNAc...) asparagine) is linked at N1350. An intrachain disulfide couples C1369 to C1384. The helical transmembrane segment at 1415-1435 threads the bilayer; the sequence is LVVVLMAVLLLLALLTAALIL. The Cytoplasmic portion of the chain corresponds to 1436–1479; it reads YRRRQSIERGAFEGARYSRSSSSPTEATEKNILVSDMEMNEQQE. The tract at residues 1450–1479 is disordered; it reads ARYSRSSSSPTEATEKNILVSDMEMNEQQE.

Interacts with C-terminal region of type I collagen/COL1A1. Interacts directly with PLAUR/UPAR and PLAU/pro-UPA to form a tri-molecular complex. Interacts with collagen V. Post-translationally, N-glycosylated. Ubiquitous with low expression in brain, placenta, lung, kidney, pancreas, spleen, thymus and colon. Expressed in endothelial cells, fibroblasts and macrophages. Highly expressed in fetal lung and kidney.

The protein localises to the membrane. Functionally, may play a role as endocytotic lectin receptor displaying calcium-dependent lectin activity. Internalizes glycosylated ligands from the extracellular space for release in an endosomal compartment via clathrin-mediated endocytosis. May be involved in plasminogen activation system controlling the extracellular level of PLAUR/PLAU, and thus may regulate protease activity at the cell surface. May contribute to cellular uptake, remodeling and degradation of extracellular collagen matrices. May play a role during cancer progression as well as in other chronic tissue destructive diseases acting on collagen turnover. May participate in remodeling of extracellular matrix cooperating with the matrix metalloproteinases (MMPs). This Homo sapiens (Human) protein is C-type mannose receptor 2 (MRC2).